Here is a 336-residue protein sequence, read N- to C-terminus: DNA-directed RNA polymerase subunit alpha (336 aa).

The alpha N-terminal domain (alpha-NTD) stretch occupies residues Met-1–Asp-232. The interval Phe-248 to Tyr-336 is alpha C-terminal domain (alpha-CTD).

Belongs to the RNA polymerase alpha chain family. As to quaternary structure, homodimer. The RNAP catalytic core consists of 2 alpha, 1 beta, 1 beta' and 1 omega subunit. When a sigma factor is associated with the core the holoenzyme is formed, which can initiate transcription.

It carries out the reaction RNA(n) + a ribonucleoside 5'-triphosphate = RNA(n+1) + diphosphate. Its function is as follows. DNA-dependent RNA polymerase catalyzes the transcription of DNA into RNA using the four ribonucleoside triphosphates as substrates. This is DNA-directed RNA polymerase subunit alpha from Rhizobium rhizogenes (strain K84 / ATCC BAA-868) (Agrobacterium radiobacter).